The following is a 358-amino-acid chain: Peptide chain release factor 2 (358 aa).

At Gln-242 the chain carries N5-methylglutamine.

This sequence belongs to the prokaryotic/mitochondrial release factor family. Post-translationally, methylated by PrmC. Methylation increases the termination efficiency of RF2.

The protein localises to the cytoplasm. Its function is as follows. Peptide chain release factor 2 directs the termination of translation in response to the peptide chain termination codons UGA and UAA. The protein is Peptide chain release factor 2 (prfB) of Borreliella burgdorferi (strain ATCC 35210 / DSM 4680 / CIP 102532 / B31) (Borrelia burgdorferi).